Reading from the N-terminus, the 1357-residue chain is DNA-directed RNA polymerase subunit beta (1357 aa).

This sequence belongs to the RNA polymerase beta chain family. In terms of assembly, the RNAP catalytic core consists of 2 alpha, 1 beta, 1 beta' and 1 omega subunit. When a sigma factor is associated with the core the holoenzyme is formed, which can initiate transcription.

It catalyses the reaction RNA(n) + a ribonucleoside 5'-triphosphate = RNA(n+1) + diphosphate. Functionally, DNA-dependent RNA polymerase catalyzes the transcription of DNA into RNA using the four ribonucleoside triphosphates as substrates. The sequence is that of DNA-directed RNA polymerase subunit beta from Pseudomonas fluorescens (strain SBW25).